Consider the following 500-residue polypeptide: Probable cytosol aminopeptidase (500 aa).

Mn(2+)-binding residues include lysine 268 and aspartate 273. Lysine 280 is an active-site residue. Mn(2+) contacts are provided by aspartate 291, aspartate 350, and glutamate 352. Arginine 354 is a catalytic residue.

This sequence belongs to the peptidase M17 family. Mn(2+) serves as cofactor.

Its subcellular location is the cytoplasm. The enzyme catalyses Release of an N-terminal amino acid, Xaa-|-Yaa-, in which Xaa is preferably Leu, but may be other amino acids including Pro although not Arg or Lys, and Yaa may be Pro. Amino acid amides and methyl esters are also readily hydrolyzed, but rates on arylamides are exceedingly low.. The catalysed reaction is Release of an N-terminal amino acid, preferentially leucine, but not glutamic or aspartic acids.. Presumably involved in the processing and regular turnover of intracellular proteins. Catalyzes the removal of unsubstituted N-terminal amino acids from various peptides. The sequence is that of Probable cytosol aminopeptidase from Aromatoleum aromaticum (strain DSM 19018 / LMG 30748 / EbN1) (Azoarcus sp. (strain EbN1)).